The sequence spans 338 residues: CRISPR-associated endonuclease Cas1 (338 aa).

3 residues coordinate Mn(2+): E155, H220, and E235.

It belongs to the CRISPR-associated endonuclease Cas1 family. Homodimer, forms a heterotetramer with a Cas2 homodimer. It depends on Mg(2+) as a cofactor. Requires Mn(2+) as cofactor.

Its function is as follows. CRISPR (clustered regularly interspaced short palindromic repeat), is an adaptive immune system that provides protection against mobile genetic elements (viruses, transposable elements and conjugative plasmids). CRISPR clusters contain spacers, sequences complementary to antecedent mobile elements, and target invading nucleic acids. CRISPR clusters are transcribed and processed into CRISPR RNA (crRNA). Acts as a dsDNA endonuclease. Involved in the integration of spacer DNA into the CRISPR cassette. The type III-A Csm effector complex binds crRNA and acts as a crRNA-guided RNase, DNase and cyclic oligoadenylate synthase; binding of target RNA cognate to the crRNA is required for all activities. In Mycobacterium tuberculosis (strain CDC 1551 / Oshkosh), this protein is CRISPR-associated endonuclease Cas1.